Here is a 1272-residue protein sequence, read N- to C-terminus: AF4/FMR2 family member 2 (1272 aa).

Disordered regions lie at residues 151–190 (SNRKSKSEWPRDSHNTSPAQASQTSSQPNKMQTSTQDPPQ), 204–231 (PQIGTVEKSNPSSKEENNPNSGGEDTFK), 372–401 (TLQKWSDPSSRASTKMLEDDLKLSSDEDDL), 422–497 (KAKP…QLDK), 557–694 (IREK…ETLQ), 715–743 (TLSTLTNGNSNNLSTSNEETAFSPPPAMQ), and 772–899 (PGQN…QDKN). A compositionally biased stretch (basic and acidic residues) spans 155–164 (SKSEWPRDSH). The segment covering 165-179 (NTSPAQASQTSSQPN) has biased composition (low complexity). A compositionally biased stretch (polar residues) spans 180 to 189 (KMQTSTQDPP). The segment covering 210-227 (EKSNPSSKEENNPNSGGE) has biased composition (low complexity). Residues 374–384 (QKWSDPSSRAS) are compositionally biased toward polar residues. Over residues 387–396 (MLEDDLKLSS) the composition is skewed to basic and acidic residues. The residue at position 395 (Ser395) is a Phosphoserine. A compositionally biased stretch (polar residues) spans 436 to 450 (TPQSTPATQTNVGSG). The residue at position 482 (Thr482) is a Phosphothreonine. Positions 580–590 (STSVDTVSQRT) are enriched in polar residues. Positions 620–633 (PKEKGSVELPDPPR) are enriched in basic and acidic residues. Positions 634–644 (SRNKATAHKPV) are enriched in basic residues. Over residues 715–734 (TLSTLTNGNSNNLSTSNEET) the composition is skewed to low complexity. Positions 815–831 (PAETAEKIPEKKQRLED) are enriched in basic and acidic residues. Residues 841 to 850 (CISPAPPHKP) show a composition bias toward pro residues. Polar residues predominate over residues 887 to 899 (VSGNNGHFGQDKN).

Belongs to the AF4 family. As to expression, highly expressed in the hippocampus, the piriform cortex, Purkinje cells and the cingulate gyrus.

It localises to the nucleus speckle. Its function is as follows. RNA-binding protein. Might be involved in alternative splicing regulation through an interaction with G-quartet RNA structure. The protein is AF4/FMR2 family member 2 of Mus musculus (Mouse).